Consider the following 67-residue polypeptide: Large ribosomal subunit protein bL32 (67 aa).

Over residues 1-19 (MAVPKRKQSRANTHARRSQ) the composition is skewed to basic residues. The segment at 1 to 20 (MAVPKRKQSRANTHARRSQW) is disordered.

This sequence belongs to the bacterial ribosomal protein bL32 family.

The protein is Large ribosomal subunit protein bL32 of Leifsonia xyli subsp. xyli (strain CTCB07).